Reading from the N-terminus, the 421-residue chain is Osmoprotective compounds-binding protein GgtB (421 aa).

The first 18 residues, 1–18, serve as a signal peptide directing secretion; that stretch reads MKFFKITTLIISLIVLTS. Residue Cys-19 is the site of N-palmitoyl cysteine attachment. Residue Cys-19 is the site of S-diacylglycerol cysteine attachment.

It belongs to the bacterial solute-binding protein 1 family. The complex is composed of two ATP-binding proteins (GgtA), two transmembrane proteins (GgtC and GgtD) and a solute-binding protein (GgtB).

Its subcellular location is the cell membrane. Functionally, part of the ABC transporter complex GgtABCD involved in the uptake of the osmoprotective compounds glucosylglycerol (GG), sucrose and trehalose. Binds glucosylglycerol and exhibits a somewhat lower affinity towards sucrose and a substantially lower affinity towards trehalose. The polypeptide is Osmoprotective compounds-binding protein GgtB (Synechocystis sp. (strain ATCC 27184 / PCC 6803 / Kazusa)).